A 231-amino-acid chain; its full sequence is MNRLMIVSLLGIATALGGCVNPPPKPNDPYYAPVLPRTPLPAAQNNGAIYQAGFEQNLYDDRKAFRVGDIITITLNEKTQASKKANSDIQKDSKTKMGLTSLFGSGMTTNNPIGGGDLSLSAEYGGSRDAKGDSQAGQSNSLTGSITVTVAEVLPNGILSVRGEKWMTLNTGNELVRIAGLVRADDIATDNTVSSTRVADARITYSGTGAFADASQPGWLDRFFLSPLWPF.

Positions 1 to 18 (MNRLMIVSLLGIATALGG) are cleaved as a signal peptide. The N-palmitoyl cysteine moiety is linked to residue Cys19. Cys19 carries S-diacylglycerol cysteine lipidation. Residues 118-141 (LSLSAEYGGSRDAKGDSQAGQSNS) are disordered.

The protein belongs to the FlgH family. In terms of assembly, the basal body constitutes a major portion of the flagellar organelle and consists of four rings (L,P,S, and M) mounted on a central rod.

The protein resides in the cell outer membrane. The protein localises to the bacterial flagellum basal body. Assembles around the rod to form the L-ring and probably protects the motor/basal body from shearing forces during rotation. The polypeptide is Flagellar L-ring protein (Pseudomonas aeruginosa (strain LESB58)).